A 761-amino-acid polypeptide reads, in one-letter code: Elongation factor G, mitochondrial (761 aa).

The N-terminal 42 residues, 1 to 42 (MSVQKMMRVPRKMVGGRIPFFTCSKVFSGFSRRSFHESPLAR), are a transit peptide targeting the mitochondrion. Residues 68–349 (NKLRNIGISA…AIVDYLPNPS (282 aa)) form the tr-type G domain. GTP is bound by residues 77–84 (AHIDSGKT), 148–152 (DTPGH), and 202–205 (NKMD).

The protein belongs to the TRAFAC class translation factor GTPase superfamily. Classic translation factor GTPase family. EF-G/EF-2 subfamily. In terms of processing, the precursor is processed in two steps involving mitochondrial intermediate peptidase (MIP) and mitochondrial processing peptidase (MPP).

It localises to the mitochondrion. It participates in protein biosynthesis; polypeptide chain elongation. Its function is as follows. Mitochondrial GTPase that catalyzes the GTP-dependent ribosomal translocation step during translation elongation. During this step, the ribosome changes from the pre-translocational (PRE) to the post-translocational (POST) state as the newly formed A-site-bound peptidyl-tRNA and P-site-bound deacylated tRNA move to the P and E sites, respectively. Catalyzes the coordinated movement of the two tRNA molecules, the mRNA and conformational changes in the ribosome. This Saccharomyces cerevisiae (strain YJM789) (Baker's yeast) protein is Elongation factor G, mitochondrial.